A 273-amino-acid polypeptide reads, in one-letter code: DNA replication complex GINS protein psf2 (273 aa).

Disordered regions lie at residues 88-110 (KEDP…SQPG) and 240-273 (ASAE…DMGL). Over residues 244–257 (ATRREEEEEARRGG) the composition is skewed to basic and acidic residues. Positions 261 to 273 (GDGDEDSDEDMGL) are enriched in acidic residues.

It belongs to the GINS2/PSF2 family. In terms of assembly, component of the GINS complex which is a heterotetramer of div-26/sld5, drc-1/psf1, drc-2/psf2 and drc-3/psf3.

The protein localises to the nucleus. Functionally, the GINS complex plays an essential role in the initiation of DNA replication. Has a role in chromosome segregation. The polypeptide is DNA replication complex GINS protein psf2 (drc-2) (Neurospora crassa (strain ATCC 24698 / 74-OR23-1A / CBS 708.71 / DSM 1257 / FGSC 987)).